A 274-amino-acid chain; its full sequence is NH(3)-dependent NAD(+) synthetase (274 aa).

46 to 53 serves as a coordination point for ATP; sequence GISGGQDS. A Mg(2+)-binding site is contributed by aspartate 52. Arginine 140 is a binding site for deamido-NAD(+). Threonine 160 serves as a coordination point for ATP. Residue glutamate 165 coordinates Mg(2+). Lysine 173 and aspartate 180 together coordinate deamido-NAD(+). Positions 189 and 211 each coordinate ATP. 260 to 261 contributes to the deamido-NAD(+) binding site; sequence HK.

The protein belongs to the NAD synthetase family. In terms of assembly, homodimer.

The enzyme catalyses deamido-NAD(+) + NH4(+) + ATP = AMP + diphosphate + NAD(+) + H(+). Its pathway is cofactor biosynthesis; NAD(+) biosynthesis; NAD(+) from deamido-NAD(+) (ammonia route): step 1/1. Functionally, catalyzes the ATP-dependent amidation of deamido-NAD to form NAD. Uses ammonia as a nitrogen source. In Streptococcus mutans serotype c (strain ATCC 700610 / UA159), this protein is NH(3)-dependent NAD(+) synthetase.